The chain runs to 437 residues: Purple acid phosphatase 21 (437 aa).

A signal peptide spans 1–25 (MKKMKIFGFLISFSLFFLSPFVCQA). Residue asparagine 30 is glycosylated (N-linked (GlcNAc...) asparagine). Aspartate 152, aspartate 179, and tyrosine 182 together coordinate Fe cation. Aspartate 179 provides a ligand contact to Zn(2+). Zn(2+)-binding residues include asparagine 212 and histidine 296. Asparagine 212 lines the substrate pocket. Histidine 306 serves as the catalytic Proton donor. Histidine 333 serves as a coordination point for Zn(2+). Residue 333 to 335 (HVH) participates in substrate binding. A Fe cation-binding site is contributed by histidine 335.

The protein belongs to the metallophosphoesterase superfamily. Purple acid phosphatase family. Homodimer. Requires Fe cation as cofactor. The cofactor is Zn(2+). As to expression, expressed flowers and siliques.

The protein resides in the secreted. It carries out the reaction a phosphate monoester + H2O = an alcohol + phosphate. The sequence is that of Purple acid phosphatase 21 (PAP21) from Arabidopsis thaliana (Mouse-ear cress).